Reading from the N-terminus, the 270-residue chain is Mevalonyl-coenzyme A hydratase sidH (270 aa).

The PTS1-type peroxisomal targeting signal motif lies at 268-270; it reads SKL.

Belongs to the enoyl-CoA hydratase/isomerase family.

Its subcellular location is the peroxisome. It functions in the pathway siderophore biosynthesis. Its function is as follows. Mevalonyl-coenzyme A hydratase; part of the siderophore biosynthetic pathway. Aspergillus fumigatus produces 4 types of siderophores, low-molecular-mass iron chelators, including excreted fusarinine C (FsC) and triacetylfusarinine C (TAFC) for iron uptake and intacellular ferricrocin (FC) for hyphal and hydroxyferricrocin (HFC) for conidial iron distribution and storage. TAFC consists of 3 N(2)-acetyl-N(5)-anhydromevalonyl-N(5)-hydroxyornithine residues cyclically linked by ester bonds; FC is a cyclic hexapeptide with the structure Gly-Ser-Gly-(N(5)-acetyl-N(5)-hydroxyornithine)x3. The biosynthesis of all four siderophores depends on the hydroxylation of ornithine, catalyzed by the monooxygenase sidA. Subsequently, the pathways for biosynthesis of extra- and intracellular siderophores split. For biosynthesis of extracellular siderophores, the transacylase sidF transfers anhydromevalonyl to N(5)-hydroxyornithine. The required anhydromevalonyl-CoA moiety is derived from mevalonate by CoA ligation and dehydration catalyzed by sidI and sidH respectively. The acetylation of N(5)-hydroxyornithine for FC biosynthesis involves the constitutively expressed sidL. FC is hydroxylated to HFC by an as yet uncharacterized enzyme during conidiation. Assembly of fusarinine C (FsC) and FC is catalyzed by two different nonribosomal peptide synthetases (NRPS), sidD and sidC respectively. Subsequently, sidG catalyzes N2-acetylation of FsC for forming TAFC. Both extra- and intracellular siderophores are crucial for growth during iron limitation and virulence. This chain is Mevalonyl-coenzyme A hydratase sidH, found in Aspergillus fumigatus (strain ATCC MYA-4609 / CBS 101355 / FGSC A1100 / Af293) (Neosartorya fumigata).